A 105-amino-acid polypeptide reads, in one-letter code: Large ribosomal subunit protein uL24 (105 aa).

It belongs to the universal ribosomal protein uL24 family. As to quaternary structure, part of the 50S ribosomal subunit.

Its function is as follows. One of two assembly initiator proteins, it binds directly to the 5'-end of the 23S rRNA, where it nucleates assembly of the 50S subunit. One of the proteins that surrounds the polypeptide exit tunnel on the outside of the subunit. The sequence is that of Large ribosomal subunit protein uL24 from Tolumonas auensis (strain DSM 9187 / NBRC 110442 / TA 4).